Reading from the N-terminus, the 434-residue chain is Putative polysaccharide biosynthesis protein with aminopeptidase-like domain (434 aa).

Aminopeptidase-like stretches follow at residues 1–55 (MEEI…IHEV) and 57–355 (SGTK…IENN). Residues 56–164 (KSGTKVFDWT…VVIDSSLEDG (109 aa)) are insert. Residues histidine 189, aspartate 195, and histidine 324 each coordinate Zn(2+). Residues 356-434 (RTYLNLNPKC…LYRVELLKLV (79 aa)) are permutated winged helix-turn-helix.

The protein belongs to the UPF0770 family. Homotrimer. Zn(2+) is required as a cofactor.

Its function is as follows. The genomic context suggests a role in the biosynthesis of modified polysaccharides; this association with genes involved in carbohydrate metabolism is observed in several phylogenetically distinct taxa. Is not expected to have peptidase activity despite low similarity to aminopeptidases. In Clostridium acetobutylicum (strain ATCC 824 / DSM 792 / JCM 1419 / IAM 19013 / LMG 5710 / NBRC 13948 / NRRL B-527 / VKM B-1787 / 2291 / W), this protein is Putative polysaccharide biosynthesis protein with aminopeptidase-like domain.